Here is a 419-residue protein sequence, read N- to C-terminus: Gamma-glutamyl phosphate reductase (419 aa).

This sequence belongs to the gamma-glutamyl phosphate reductase family.

It is found in the cytoplasm. It catalyses the reaction L-glutamate 5-semialdehyde + phosphate + NADP(+) = L-glutamyl 5-phosphate + NADPH + H(+). Its pathway is amino-acid biosynthesis; L-proline biosynthesis; L-glutamate 5-semialdehyde from L-glutamate: step 2/2. Functionally, catalyzes the NADPH-dependent reduction of L-glutamate 5-phosphate into L-glutamate 5-semialdehyde and phosphate. The product spontaneously undergoes cyclization to form 1-pyrroline-5-carboxylate. The sequence is that of Gamma-glutamyl phosphate reductase from Syntrophomonas wolfei subsp. wolfei (strain DSM 2245B / Goettingen).